The chain runs to 553 residues: Hydroxylamine reductase (553 aa).

Residues cysteine 3, cysteine 6, cysteine 18, and cysteine 25 each coordinate [2Fe-2S] cluster. 8 residues coordinate hybrid [4Fe-2O-2S] cluster: histidine 252, glutamate 276, cysteine 320, cysteine 408, cysteine 436, cysteine 461, glutamate 495, and lysine 497. Cysteine 408 is subject to Cysteine persulfide.

Belongs to the HCP family. [2Fe-2S] cluster serves as cofactor. The cofactor is hybrid [4Fe-2O-2S] cluster.

The protein localises to the cytoplasm. It catalyses the reaction A + NH4(+) + H2O = hydroxylamine + AH2 + H(+). In terms of biological role, catalyzes the reduction of hydroxylamine to form NH(3) and H(2)O. The sequence is that of Hydroxylamine reductase from Photobacterium phosphoreum.